Here is a 323-residue protein sequence, read N- to C-terminus: Cytochrome c biogenesis protein CcsA (323 aa).

The next 8 helical transmembrane spans lie at Ile-9–Leu-29, Met-45–Tyr-62, Leu-71–Phe-91, Leu-98–Leu-118, Met-143–Ile-163, Ile-227–Asn-247, Thr-261–His-275, and Val-285–Val-305.

Belongs to the CcmF/CycK/Ccl1/NrfE/CcsA family. In terms of assembly, may interact with Ccs1.

The protein localises to the plastid. It is found in the chloroplast thylakoid membrane. Functionally, required during biogenesis of c-type cytochromes (cytochrome c6 and cytochrome f) at the step of heme attachment. The sequence is that of Cytochrome c biogenesis protein CcsA from Calycanthus floridus var. glaucus (Eastern sweetshrub).